We begin with the raw amino-acid sequence, 143 residues long: MKVEVVVEVRHTENKQKVIHALENIFTPKKIEEKRSDVGTVLIASCEGHECLEKLRSAIWRQGIQDAARSVIARGIVAEDTVVFSVNKQAAYAGVVSFVTEPNESPLGPITFTVKTSNTRQFLDWIAPRTYRGRVYYQAPPPD.

The protein belongs to the UPF0201 family.

In Pyrobaculum arsenaticum (strain DSM 13514 / JCM 11321 / PZ6), this protein is UPF0201 protein Pars_1985.